We begin with the raw amino-acid sequence, 476 residues long: Glycogen synthase (476 aa).

Lys-15 lines the ADP-alpha-D-glucose pocket.

It belongs to the glycosyltransferase 1 family. Bacterial/plant glycogen synthase subfamily.

The enzyme catalyses [(1-&gt;4)-alpha-D-glucosyl](n) + ADP-alpha-D-glucose = [(1-&gt;4)-alpha-D-glucosyl](n+1) + ADP + H(+). It participates in glycan biosynthesis; glycogen biosynthesis. Synthesizes alpha-1,4-glucan chains using ADP-glucose. This is Glycogen synthase from Bacillus cereus (strain ATCC 10987 / NRS 248).